Here is a 145-residue protein sequence, read N- to C-terminus: MRQTFMANESNIERKWYVIDAEGQTLGRLSSEVAAILRGKNKVTYTPHVDTGDYVIIINASKIEFTGNKEQDKMYYRHSNHPGGLKSISAGELKRTNPERLLETSIKGMLPSTRLGEKQGKKLFVYGGAEHPHAAQQPENYELRG.

This sequence belongs to the universal ribosomal protein uL13 family. Part of the 50S ribosomal subunit.

This protein is one of the early assembly proteins of the 50S ribosomal subunit, although it is not seen to bind rRNA by itself. It is important during the early stages of 50S assembly. This is Large ribosomal subunit protein uL13 from Staphylococcus epidermidis (strain ATCC 35984 / DSM 28319 / BCRC 17069 / CCUG 31568 / BM 3577 / RP62A).